Reading from the N-terminus, the 1770-residue chain is Transposon Ty2-DR2 Gag-Pol polyprotein (1770 aa).

2 stretches are compositionally biased toward polar residues: residues 1–39 (MESQ…SASN) and 49–60 (KVNSQEETTPGT). Disordered regions lie at residues 1–89 (MESQ…QQHG) and 360–449 (HSEY…SNDE). Residues 295 to 397 (ENNINVSDRL…SSKPRAAKAH (103 aa)) are RNA-binding. Low complexity predominate over residues 369–381 (TSPNTTNTKVTTR). Polar residues-rich tracts occupy residues 399–408 (IATSSKFSRV) and 415–435 (ESTV…GQQQ). The active-site For protease activity; shared with dimeric partner is D457. Positions 579–636 (NVNKSKSVNKYPYPLIHRMLGHANFRSIQKSLKKNAVTYLKESDIEWSNASTYQCPDC) are integrase-type zinc finger-like. Positions 656-831 (ESYEPFQYLH…AGLDITTILP (176 aa)) constitute an Integrase catalytic domain. Residues D667 and D732 each contribute to the Mg(2+) site. Disordered regions lie at residues 1005 to 1038 (GGTI…MIDL), 1059 to 1135 (TEEP…KSSK), and 1171 to 1222 (SRQT…LEPP). Polar residues-rich tracts occupy residues 1009-1024 (ESDT…FTAR) and 1065-1082 (QRNS…STPS). Positions 1193-1227 (KKRSLEDNETEIEVSRDTWNNKNMRSLEPPRSKKR) match the Bipartite nuclear localization signal motif. Residues 1353–1491 (NDYYITQLDI…DILGLEIKYQ (139 aa)) enclose the Reverse transcriptase Ty1/copia-type domain. Positions 1361, 1442, 1443, 1625, 1667, and 1700 each coordinate Mg(2+). An RNase H Ty1/copia-type domain is found at 1625–1767 (DASYGNQPYY…IKTFKLLTNK (143 aa)).

As to quaternary structure, the capsid protein forms a homotrimer, from which the VLPs are assembled. The protease is a homodimer, whose active site consists of two apposed aspartic acid residues. In terms of processing, initially, virus-like particles (VLPs) are composed of the structural unprocessed proteins Gag and Gag-Pol, and also contain the host initiator methionine tRNA (tRNA(i)-Met) which serves as a primer for minus-strand DNA synthesis, and a dimer of genomic Ty RNA. Processing of the polyproteins occurs within the particle and proceeds by an ordered pathway, called maturation. First, the protease (PR) is released by autocatalytic cleavage of the Gag-Pol polyprotein, and this cleavage is a prerequisite for subsequent processing at the remaining sites to release the mature structural and catalytic proteins. Maturation takes place prior to the RT reaction and is required to produce transposition-competent VLPs.

The protein resides in the cytoplasm. It localises to the nucleus. It catalyses the reaction DNA(n) + a 2'-deoxyribonucleoside 5'-triphosphate = DNA(n+1) + diphosphate. It carries out the reaction Endonucleolytic cleavage to 5'-phosphomonoester.. Capsid protein (CA) is the structural component of the virus-like particle (VLP), forming the shell that encapsulates the retrotransposons dimeric RNA genome. The particles are assembled from trimer-clustered units and there are holes in the capsid shells that allow for the diffusion of macromolecules. CA also has nucleocapsid-like chaperone activity, promoting primer tRNA(i)-Met annealing to the multipartite primer-binding site (PBS), dimerization of Ty2 RNA and initiation of reverse transcription. Functionally, the aspartyl protease (PR) mediates the proteolytic cleavages of the Gag and Gag-Pol polyproteins after assembly of the VLP. In terms of biological role, reverse transcriptase/ribonuclease H (RT) is a multifunctional enzyme that catalyzes the conversion of the retro-elements RNA genome into dsDNA within the VLP. The enzyme displays a DNA polymerase activity that can copy either DNA or RNA templates, and a ribonuclease H (RNase H) activity that cleaves the RNA strand of RNA-DNA heteroduplexes during plus-strand synthesis and hydrolyzes RNA primers. The conversion leads to a linear dsDNA copy of the retrotransposon that includes long terminal repeats (LTRs) at both ends. Its function is as follows. Integrase (IN) targets the VLP to the nucleus, where a subparticle preintegration complex (PIC) containing at least integrase and the newly synthesized dsDNA copy of the retrotransposon must transit the nuclear membrane. Once in the nucleus, integrase performs the integration of the dsDNA into the host genome. The sequence is that of Transposon Ty2-DR2 Gag-Pol polyprotein (TY2B-DR2) from Saccharomyces cerevisiae (strain ATCC 204508 / S288c) (Baker's yeast).